Here is a 179-residue protein sequence, read N- to C-terminus: NADH-quinone oxidoreductase subunit B (179 aa).

Residues Cys-53, Cys-54, Cys-118, and Cys-148 each contribute to the [4Fe-4S] cluster site.

Belongs to the complex I 20 kDa subunit family. NDH-1 is composed of 14 different subunits. Subunits NuoB, C, D, E, F, and G constitute the peripheral sector of the complex. [4Fe-4S] cluster is required as a cofactor.

The protein localises to the cell membrane. It carries out the reaction a quinone + NADH + 5 H(+)(in) = a quinol + NAD(+) + 4 H(+)(out). In terms of biological role, NDH-1 shuttles electrons from NADH, via FMN and iron-sulfur (Fe-S) centers, to quinones in the respiratory chain. The immediate electron acceptor for the enzyme in this species is believed to be a menaquinone. Couples the redox reaction to proton translocation (for every two electrons transferred, four hydrogen ions are translocated across the cytoplasmic membrane), and thus conserves the redox energy in a proton gradient. The protein is NADH-quinone oxidoreductase subunit B of Bacillus thuringiensis (strain Al Hakam).